The following is a 299-amino-acid chain: Ribosomal RNA small subunit methyltransferase H (299 aa).

Residues 36–38 (GGH), Asp55, Tyr82, Asp103, and Gln110 each bind S-adenosyl-L-methionine. Basic and acidic residues-rich tracts occupy residues 269–282 (PVRP…ENPR) and 289–299 (RAAERIEEGGD). Residues 269 to 299 (PVRPSEEEIRENPRARSGRLRAAERIEEGGD) form a disordered region.

The protein belongs to the methyltransferase superfamily. RsmH family.

The protein localises to the cytoplasm. It catalyses the reaction cytidine(1402) in 16S rRNA + S-adenosyl-L-methionine = N(4)-methylcytidine(1402) in 16S rRNA + S-adenosyl-L-homocysteine + H(+). Functionally, specifically methylates the N4 position of cytidine in position 1402 (C1402) of 16S rRNA. In Thermotoga maritima (strain ATCC 43589 / DSM 3109 / JCM 10099 / NBRC 100826 / MSB8), this protein is Ribosomal RNA small subunit methyltransferase H.